We begin with the raw amino-acid sequence, 350 residues long: Inhibin beta E chain (350 aa).

The N-terminal stretch at 1-19 (MRLPDVQLWLVLLWALVRA) is a signal peptide. Positions 20-236 (QGTGSVCPSC…EPGAGRARRR (217 aa)) are excised as a propeptide. An N-linked (GlcNAc...) asparagine glycan is attached at Asn-198. 4 disulfides stabilise this stretch: Cys-240–Cys-248, Cys-247–Cys-315, Cys-276–Cys-347, and Cys-280–Cys-349.

This sequence belongs to the TGF-beta family. Homodimeric or heterodimeric through association with alpha and beta subunits, linked by one or more disulfide bonds. Inhibins are heterodimers of one alpha and one beta subunit. Activins are homo- or heterodimers of beta subunits only.

It localises to the secreted. Inhibins and activins inhibit and activate, respectively, the secretion of follitropin by the pituitary gland. Inhibins/activins are involved in regulating a number of diverse functions such as hypothalamic and pituitary hormone secretion, gonadal hormone secretion, germ cell development and maturation, erythroid differentiation, insulin secretion, nerve cell survival, embryonic axial development or bone growth, depending on their subunit composition. Inhibins appear to oppose the functions of activins. In terms of biological role, activin E is a homodimer of INHBE secreted by the liver that plays a crucial role in regulating metabolic homeostasis particularly in lipid metabolism and energy homeostasis. Plays a central role in the regulation of adipose tissue lipolysis by preventing the influx of fatty acids from adipose tissue into the liver. Mechanistically, signals via ACVR1C to activate SMAD2/3 signaling, suppressing PPARG target genes in adipose tissue, thereby reducing liver lipid content and improving glycemic control. Induces beige adipocyte formation and thermogenesis in response to cold exposure. The polypeptide is Inhibin beta E chain (INHBE) (Homo sapiens (Human)).